We begin with the raw amino-acid sequence, 423 residues long: Histidine--tRNA ligase (423 aa).

This sequence belongs to the class-II aminoacyl-tRNA synthetase family. As to quaternary structure, homodimer.

It is found in the cytoplasm. It carries out the reaction tRNA(His) + L-histidine + ATP = L-histidyl-tRNA(His) + AMP + diphosphate + H(+). The polypeptide is Histidine--tRNA ligase (hisS) (Mycobacterium bovis (strain ATCC BAA-935 / AF2122/97)).